The primary structure comprises 456 residues: Carnosine N-methyltransferase unmet (456 aa).

S-adenosyl-L-methionine-binding residues include R154, G195, E216, D282, F283, and C299. Residues D303, H334, and Y385 each contribute to the carnosine site. A compositionally biased stretch (basic and acidic residues) spans 402–418; the sequence is RGKRKASREPHDLIVRE. The tract at residues 402–456 is disordered; that stretch reads RGKRKASREPHDLIVREDSEEEGEQQPERNETEEKQQLKPLATANCETEIKEQPS. S408 and S420 each carry phosphoserine. A compositionally biased stretch (basic and acidic residues) spans 427–438; it reads QPERNETEEKQQ.

This sequence belongs to the carnosine N-methyltransferase family. In terms of assembly, associates with the GATOR2 complex; the interaction is probably direct and is inhibited by S-adenosyl-L-methionine binding. Associates with the GATOR1 complex; the interaction is probably indirect and mediated by the GATOR2 complex.

The catalysed reaction is carnosine + S-adenosyl-L-methionine = anserine + S-adenosyl-L-homocysteine + H(+). Functionally, S-adenosyl-L-methionine-binding protein that acts as a sensor to signal methionine availability to the mTORC1 signaling pathway. Associates with the GATOR2 complex in the absence of methionine to inhibit mTORC1 signaling, but dissociates in the presence of the methionine derivative S-adenosyl-L-methionine; S-adenosyl-L-homocysteine binding does not induce dissociation. Required for mTORC1 pathway response to methionine starvation. Exerts a protective function on developing egg chambers by inhibiting mTORC1 signaling under starvation conditions. May also function as a N-methyltransferase that mediates the formation of anserine (beta-alanyl-N(Pi)-methyl-L-histidine) from carnosine. It is unclear whether this protein has retained N-methyltransferase activity or if it is an evolutionary intermediate whose substrate binding ability has been co-opted to function as a nutrient sensor for mTORC1 signaling. In Drosophila melanogaster (Fruit fly), this protein is Carnosine N-methyltransferase unmet.